The sequence spans 321 residues: Ribose-phosphate pyrophosphokinase C (321 aa).

Residues Asp-132 and Asp-147 each coordinate Mg(2+). Positions 214–229 (SGKVAIIIGSIADTCE) are binding of phosphoribosylpyrophosphate.

Belongs to the ribose-phosphate pyrophosphokinase family. Requires Mg(2+) as cofactor.

The protein resides in the cytoplasm. The catalysed reaction is D-ribose 5-phosphate + ATP = 5-phospho-alpha-D-ribose 1-diphosphate + AMP + H(+). It functions in the pathway metabolic intermediate biosynthesis; 5-phospho-alpha-D-ribose 1-diphosphate biosynthesis; 5-phospho-alpha-D-ribose 1-diphosphate from D-ribose 5-phosphate (route I): step 1/1. The sequence is that of Ribose-phosphate pyrophosphokinase C (prsC) from Dictyostelium discoideum (Social amoeba).